We begin with the raw amino-acid sequence, 282 residues long: 2,3,4,5-tetrahydropyridine-2,6-dicarboxylate N-succinyltransferase (282 aa).

Positions 109 and 146 each coordinate substrate.

The protein belongs to the transferase hexapeptide repeat family. Homotrimer.

The protein resides in the cytoplasm. The catalysed reaction is (S)-2,3,4,5-tetrahydrodipicolinate + succinyl-CoA + H2O = (S)-2-succinylamino-6-oxoheptanedioate + CoA. It functions in the pathway amino-acid biosynthesis; L-lysine biosynthesis via DAP pathway; LL-2,6-diaminopimelate from (S)-tetrahydrodipicolinate (succinylase route): step 1/3. The polypeptide is 2,3,4,5-tetrahydropyridine-2,6-dicarboxylate N-succinyltransferase (Bartonella henselae (strain ATCC 49882 / DSM 28221 / CCUG 30454 / Houston 1) (Rochalimaea henselae)).